The chain runs to 33 residues: pyr operon leader peptide (33 aa).

This Salmonella typhi protein is pyr operon leader peptide (pyrL).